Reading from the N-terminus, the 402-residue chain is S-adenosylmethionine synthase (402 aa).

H16 serves as a coordination point for ATP. D18 contributes to the Mg(2+) binding site. E44 serves as a coordination point for K(+). 2 residues coordinate L-methionine: E57 and Q103. Residues 103-113 form a flexible loop region; sequence QSPDIAQGVDT. ATP contacts are provided by residues 178–180, 249–250, D258, 264–265, A281, and K285; these read DGK, KF, and RK. D258 is a binding site for L-methionine. Residue K289 participates in L-methionine binding.

This sequence belongs to the AdoMet synthase family. As to quaternary structure, homotetramer; dimer of dimers. Requires Mg(2+) as cofactor. It depends on K(+) as a cofactor.

The protein resides in the cytoplasm. The catalysed reaction is L-methionine + ATP + H2O = S-adenosyl-L-methionine + phosphate + diphosphate. It functions in the pathway amino-acid biosynthesis; S-adenosyl-L-methionine biosynthesis; S-adenosyl-L-methionine from L-methionine: step 1/1. Functionally, catalyzes the formation of S-adenosylmethionine (AdoMet) from methionine and ATP. The overall synthetic reaction is composed of two sequential steps, AdoMet formation and the subsequent tripolyphosphate hydrolysis which occurs prior to release of AdoMet from the enzyme. The polypeptide is S-adenosylmethionine synthase (Mycolicibacterium vanbaalenii (strain DSM 7251 / JCM 13017 / BCRC 16820 / KCTC 9966 / NRRL B-24157 / PYR-1) (Mycobacterium vanbaalenii)).